Reading from the N-terminus, the 675-residue chain is Heat shock 70 kDa protein, mitochondrial (675 aa).

A mitochondrion-targeting transit peptide spans 1–51 (MAAVLRSLRRRDVASATFSAYRSLTGSTKPAYVAQKWSCLARPFSSRPAGN). Residues 638–675 (VSKIGEHMSGGSSGGSSAGGSQGGGDQAPEAEYEEVKK) form a disordered region. Residues 648-663 (GSSGGSSAGGSQGGGD) show a composition bias toward gly residues. Over residues 666–675 (PEAEYEEVKK) the composition is skewed to acidic residues.

Belongs to the heat shock protein 70 family.

It is found in the mitochondrion. This chain is Heat shock 70 kDa protein, mitochondrial, found in Phaseolus vulgaris (Kidney bean).